Here is a 475-residue protein sequence, read N- to C-terminus: Actin-related protein 10 (475 aa).

This sequence belongs to the actin family.

The protein localises to the cytoplasm. It is found in the cytoskeleton. The chain is Actin-related protein 10 from Dictyostelium discoideum (Social amoeba).